The primary structure comprises 231 residues: Phycobilisome rod-core linker polypeptide cpcG (231 aa).

In terms of domain architecture, PBS-linker spans 11-191 (STQNQRVDGY…PRYGADFKEK (181 aa)).

Belongs to the phycobilisome linker protein family. The phycobilisome is a hemidiscoidal structure that is composed of two distinct substructures: a core complex and a number of rods radiating from the core.

The protein resides in the plastid. It is found in the chloroplast. It localises to the chloroplast thylakoid membrane. Its function is as follows. Rod-core linker protein required for attachment of phycocyanin to allophycocyanin in cores of phycobilisomes. Linker polypeptides determine the state of aggregation and the location of the disk-shaped phycobiliprotein units within the phycobilisome and modulate their spectroscopic properties in order to mediate a directed and optimal energy transfer. This chain is Phycobilisome rod-core linker polypeptide cpcG (cpcG), found in Porphyra purpurea (Red seaweed).